Here is a 398-residue protein sequence, read N- to C-terminus: tRNA-specific 2-thiouridylase MnmA (398 aa).

ATP-binding positions include 18 to 25 (AMSGGVDS) and Leu44. Cys112 acts as the Nucleophile in catalysis. A disulfide bridge connects residues Cys112 and Cys213. Gly136 lines the ATP pocket. The interval 163–165 (RDQ) is interaction with tRNA. Residue Cys213 is the Cysteine persulfide intermediate of the active site.

Belongs to the MnmA/TRMU family.

Its subcellular location is the cytoplasm. The catalysed reaction is S-sulfanyl-L-cysteinyl-[protein] + uridine(34) in tRNA + AH2 + ATP = 2-thiouridine(34) in tRNA + L-cysteinyl-[protein] + A + AMP + diphosphate + H(+). In terms of biological role, catalyzes the 2-thiolation of uridine at the wobble position (U34) of tRNA, leading to the formation of s(2)U34. The protein is tRNA-specific 2-thiouridylase MnmA of Sinorhizobium fredii (strain NBRC 101917 / NGR234).